The following is a 1957-amino-acid chain: Chromatin modification-related protein EAF1 A (1957 aa).

4 disordered regions span residues 108–208 (ASPH…TDLV), 261–287 (NRVS…GSKT), 323–373 (GGSP…SHAN), and 449–469 (NQSH…ETEK). Residues 140–151 (SENKSVEGERNL) show a composition bias toward basic and acidic residues. Composition is skewed to polar residues over residues 261-270 (NRVSSNSLNT), 333-342 (GQKNSSTQLN), and 355-372 (TNRG…SSHA). Residues 563 to 641 (CGTAPVEVRE…LSNAILQFWS (79 aa)) enclose the HSA domain. Disordered regions lie at residues 833–909 (GSNS…AVQK) and 928–950 (AETS…DQTW). The span at 884–898 (TDASSGDTSSFQDEY) shows a compositional bias: polar residues. The SANT domain maps to 1049–1105 (SGNPWSLFEDQALVVLVHDMGPNWELISDAMNSTLKIKCIYRNPTECKDRHKILMDK). 7 disordered regions span residues 1107–1131 (AGDG…PGIP), 1282–1314 (TPVL…GLQS), 1344–1367 (LSGR…DRGH), 1449–1644 (QGNS…QQLN), 1687–1768 (PVRP…IAPA), 1804–1840 (ELSK…PQAS), and 1876–1957 (SSNT…TKVE). 6 stretches are compositionally biased toward polar residues: residues 1116–1125 (DSGNSQSYPS), 1290–1314 (AHPS…GLQS), 1344–1358 (LSGR…STPA), 1459–1472 (SNLS…TTPV), 1479–1492 (LSQQ…SHVL), and 1501–1510 (QSPSQATGAQ). 2 stretches are compositionally biased toward low complexity: residues 1523 to 1534 (QRYLQQQQQQQQ) and 1545 to 1562 (VQQP…NSPQ). Over residues 1563 to 1579 (TQPPVSPQPLSMPPVSP) the composition is skewed to pro residues. 5 stretches are compositionally biased toward polar residues: residues 1582–1595 (NINA…QKSQ), 1604–1618 (SPQS…QAGK), 1635–1644 (RQPTQGQQLN), 1691–1722 (DQQS…QQLP), and 1734–1758 (QQQM…CNIL). The span at 1759-1768 (STSSPSIAPA) shows a compositional bias: low complexity. The segment covering 1805 to 1815 (LSKKSQAERMP) has biased composition (basic and acidic residues). Polar residues-rich tracts occupy residues 1819-1832 (QSVT…SMGT) and 1876-1894 (SSNT…NQGL). Composition is skewed to basic and acidic residues over residues 1913 to 1922 (SEEKRPKLPE) and 1932 to 1942 (LASEEQPHLEE).

Belongs to the EAF1 family. As to quaternary structure, component of the NuA4 histone acetyltransferase complex. Interacts with ARP4 and SWC4, and (via HSA domain) with TAF14 and TAF14B. Expressed in leaves.

The protein resides in the nucleus. Its function is as follows. Component of the NuA4 histone acetyltransferase complex which is involved in transcriptional activation of selected genes principally by acetylation of nucleosomal histone H4 and H2A. This is Chromatin modification-related protein EAF1 A (EAF1A) from Arabidopsis thaliana (Mouse-ear cress).